The primary structure comprises 152 residues: Nucleoside diphosphate kinase (152 aa).

The ATP site is built by Lys-11, Phe-59, Arg-87, Thr-93, Arg-104, and Asn-114. The active-site Pros-phosphohistidine intermediate is His-117.

Belongs to the NDK family. In terms of assembly, homotetramer. Mg(2+) serves as cofactor.

It localises to the cytoplasm. The enzyme catalyses a 2'-deoxyribonucleoside 5'-diphosphate + ATP = a 2'-deoxyribonucleoside 5'-triphosphate + ADP. The catalysed reaction is a ribonucleoside 5'-diphosphate + ATP = a ribonucleoside 5'-triphosphate + ADP. Its function is as follows. Major role in the synthesis of nucleoside triphosphates other than ATP. The ATP gamma phosphate is transferred to the NDP beta phosphate via a ping-pong mechanism, using a phosphorylated active-site intermediate. This chain is Nucleoside diphosphate kinase, found in Prochlorococcus marinus (strain MIT 9313).